A 422-amino-acid chain; its full sequence is Lipase member M (422 aa).

Positions 1–33 (MSEILSRVWTVSHRVEIWLLILVAYLLQRNVNS) are cleaved as a signal peptide. N-linked (GlcNAc...) asparagine glycosylation is present at asparagine 48. Positions 92–392 (PVVLLQHGLL…EWAHVDFIWG (301 aa)) constitute an AB hydrolase-1 domain. The active-site Nucleophile is serine 186. Cysteine 260 and cysteine 269 are joined by a disulfide. Catalysis depends on charge relay system residues aspartate 357 and histidine 386.

Belongs to the AB hydrolase superfamily. Lipase family.

Its subcellular location is the secreted. Its function is as follows. Plays a highly specific role in the last step of keratinocyte differentiation. May have an essential function in lipid metabolism of the most differentiated epidermal layers. This Mus musculus (Mouse) protein is Lipase member M (Lipm).